The following is a 535-amino-acid chain: Pyrichalasin C-18 hydroxylase (535 aa).

A helical transmembrane segment spans residues Leu42 to Leu62. 2 N-linked (GlcNAc...) asparagine glycosylation sites follow: Asn139 and Asn222. Cys479 serves as a coordination point for heme.

This sequence belongs to the cytochrome P450 family. Heme serves as cofactor.

It localises to the membrane. The protein operates within mycotoxin biosynthesis. Functionally, cytochrome P450 monooxygenase; part of the gene cluster that mediates the biosynthesis of the mycotoxin pyrichalasin H, a tyrosine-derived cytochalasan that inhibits the growth of rice seedlings, but also inhibits lymphocyte capping and actin polymerization and alters cell morphology. Pyrichalasin H is indicated as the responsible agent for the genus-specific pathogenicity of M.grisea toward crabgrass. The first step in the pathway is catalyzed by the O-methyltransferase pyiA which methylates free tyrosine to generate the precursor O-methyltyrosine. The hybrid PKS-NRPS pyiS, assisted by the enoyl reductase pyiC, are responsible for fusion of the O-methyltyrosine precursor and the polyketide backbone. The polyketide synthase module (PKS) of pyiS is responsible for the synthesis of the polyketide backbone and the downstream nonribosomal peptide synthetase (NRPS) amidates the carboxyl end of the polyketide with the O-methyltyrosine precursor. As the NRPS A-domain demonstrates substrate tolerance, pyiS can also use phenylalanine, tyrosine and even para-chlorophenylalanine as amino acid precursor, which leads to the production of novel cytochalasans, including halogenated cytochalasans. Because pyiS lacks a designated enoylreductase (ER) domain, the required activity is provided the enoyl reductase pyiC. Reduction by the hydrolyase pyiE leads to 1,5-dihydropyrrolone, which is substrate for dehydration and intra-molecular Diels-Alder cyclization by the Diels-Alderase pyiF to yield the required isoindolone-fused macrocycle. The tailoring cytochrome P450 monooxygenases piyD and piyG catalyze the hydroxylation at C-18 and C-7, respectivily, whereas the short-chain dehydrogenase/reductase pyiH reduces the carbonyl at C-21 in preparation for the transfer of an acetyl group by the acetyltransferase pyiB. These 3 reactions whose order is not clear yet, lead to the production of O-methylpyrichalasin J, a deacetylated pyrichalasin H. Finally, pyiB to converts O-methylpyrichalasin J into the final product pyrichalasin H via acetylation of C-21. The sequence is that of Pyrichalasin C-18 hydroxylase from Pyricularia grisea (Crabgrass-specific blast fungus).